A 68-amino-acid polypeptide reads, in one-letter code: Large ribosomal subunit protein bL35 (68 aa).

This sequence belongs to the bacterial ribosomal protein bL35 family.

The sequence is that of Large ribosomal subunit protein bL35 from Fusobacterium nucleatum subsp. nucleatum (strain ATCC 25586 / DSM 15643 / BCRC 10681 / CIP 101130 / JCM 8532 / KCTC 2640 / LMG 13131 / VPI 4355).